We begin with the raw amino-acid sequence, 199 residues long: MALQVQQTSAAFTISSPSTAAARIKLSPFRTVAVNRGVRCSGGGVGGGDAGKKKAVPNSNYVVPIDKFSSSSSITRPLIEILRDLNKKIPDNIVKSHDPPSTSAATSGFIPWYHANRMLSFYAPGWCGEVRDVIFSENGNVTVVYRLTIRGSDGEAHRESTGTVTTTDDHIEDPVTAAEEIAFCRACARFGLGLYLYHE.

The transit peptide at 1–40 directs the protein to the chloroplast; it reads MALQVQQTSAAFTISSPSTAAARIKLSPFRTVAVNRGVRC. At S41 the chain carries N-acetylserine.

This sequence belongs to the RAD52 family. In terms of tissue distribution, expressed in roots and shoots. Expressed at low levels in cauline leaves, flower buds, flowers and siliques.

It localises to the plastid. It is found in the chloroplast. Involved in double-stranded DNA break repair. The sequence is that of DNA repair RAD52-like protein 2, chloroplastic from Arabidopsis thaliana (Mouse-ear cress).